The sequence spans 407 residues: Peptidase T (407 aa).

H82 lines the Zn(2+) pocket. D84 is a catalytic residue. D143 lines the Zn(2+) pocket. Catalysis depends on E177, which acts as the Proton acceptor. Residues E178, D200, and H382 each coordinate Zn(2+).

It belongs to the peptidase M20B family. It depends on Zn(2+) as a cofactor.

It localises to the cytoplasm. The enzyme catalyses Release of the N-terminal residue from a tripeptide.. Its function is as follows. Cleaves the N-terminal amino acid of tripeptides. This chain is Peptidase T, found in Streptococcus thermophilus (strain ATCC BAA-491 / LMD-9).